The sequence spans 176 residues: 2-C-methyl-D-erythritol 2,4-cyclodiphosphate synthase (176 aa).

The a divalent metal cation site is built by Asp-23, His-25, and His-60. 23–25 (DSH) serves as a coordination point for 4-CDP-2-C-methyl-D-erythritol 2-phosphate. A 4-CDP-2-C-methyl-D-erythritol 2-phosphate-binding site is contributed by 149–152 (TSGE).

It belongs to the IspF family. In terms of assembly, homotrimer. A divalent metal cation is required as a cofactor.

The enzyme catalyses 4-CDP-2-C-methyl-D-erythritol 2-phosphate = 2-C-methyl-D-erythritol 2,4-cyclic diphosphate + CMP. It functions in the pathway isoprenoid biosynthesis; isopentenyl diphosphate biosynthesis via DXP pathway; isopentenyl diphosphate from 1-deoxy-D-xylulose 5-phosphate: step 4/6. In terms of biological role, involved in the biosynthesis of isopentenyl diphosphate (IPP) and dimethylallyl diphosphate (DMAPP), two major building blocks of isoprenoid compounds. Catalyzes the conversion of 4-diphosphocytidyl-2-C-methyl-D-erythritol 2-phosphate (CDP-ME2P) to 2-C-methyl-D-erythritol 2,4-cyclodiphosphate (ME-CPP) with a corresponding release of cytidine 5-monophosphate (CMP). This Chlamydia abortus (strain DSM 27085 / S26/3) (Chlamydophila abortus) protein is 2-C-methyl-D-erythritol 2,4-cyclodiphosphate synthase.